Here is a 62-residue protein sequence, read N- to C-terminus: UPF0434 protein FTL_1400 (62 aa).

The protein belongs to the UPF0434 family.

This Francisella tularensis subsp. holarctica (strain LVS) protein is UPF0434 protein FTL_1400.